The primary structure comprises 259 residues: Heat-labile enterotoxin IIA, A chain (259 aa).

A signal peptide spans 1-18; the sequence is MIKHVLLFFVFISFSVSA. 23-37 lines the NAD(+) pocket; the sequence is RADSRTPDEIRRAGG. Residue glutamate 128 is part of the active site. Cysteine 203 and cysteine 215 are disulfide-bonded.

It belongs to the enterotoxin A family. As to quaternary structure, heterohexamer of one A chain and of five B chains.

The biological activity of the toxin is produced by the A chain, which activates intracellular adenyl cyclase. The chain is Heat-labile enterotoxin IIA, A chain from Escherichia coli.